The chain runs to 604 residues: Pescadillo homolog (604 aa).

Residues 349–448 form the BRCT domain; it reads PTSTLFSKFI…ELLPVNKYAP (100 aa). Disordered stretches follow at residues 452-562 and 579-604; these read LPPH…MTNK and TRTQELAKKKRKIEKTKAQLDKLSKK. Coiled-coil stretches lie at residues 468–522 and 573–604; these read EAEK…LEAA and GIDKKETRTQELAKKKRKIEKTKAQLDKLSKK. Acidic residues predominate over residues 476–510; the sequence is ENAEEEEEDEVDEDDEDADEDEEDEEEEDEEEDED. Residues 593–604 show a composition bias toward basic and acidic residues; it reads KTKAQLDKLSKK.

It belongs to the pescadillo family. As to quaternary structure, component of the NOP7 complex, composed of ERB1, NOP7 and YTM1. The complex is held together by ERB1, which interacts with NOP7 via its N-terminal domain and with YTM1 via a high-affinity interaction between the seven-bladed beta-propeller domains of the 2 proteins. The NOP7 complex associates with the 66S pre-ribosome.

The protein resides in the nucleus. It localises to the nucleolus. It is found in the nucleoplasm. Its function is as follows. Component of the NOP7 complex, which is required for maturation of the 25S and 5.8S ribosomal RNAs and formation of the 60S ribosome. In Scheffersomyces stipitis (strain ATCC 58785 / CBS 6054 / NBRC 10063 / NRRL Y-11545) (Yeast), this protein is Pescadillo homolog.